Here is a 589-residue protein sequence, read N- to C-terminus: Kelch-like protein 25 (589 aa).

The 69-residue stretch at 46–114 folds into the BTB domain; it reads TDVTLWAGDR…AYSSRIAINE (69 aa). One can recognise a BACK domain in the interval 149–250; the sequence is CLGMMLLSDA…LPSDCLQEAV (102 aa). Kelch repeat units follow at residues 296 to 340, 341 to 388, 389 to 444, 446 to 492, 494 to 538, and 539 to 585; these read TLLI…AIGC, KVYV…ELEN, CLYV…SAKL, LFVF…VLGS, IFIM…ASGN, and KLYV…STWK.

In terms of assembly, component of the BCR(KLHL25) E3 ubiquitin ligase complex, at least composed of CUL3, KLHL25 and RBX1.

The protein operates within protein modification; protein ubiquitination. Substrate-specific adapter of a BCR (BTB-CUL3-RBX1) E3 ubiquitin ligase complex involved in various processes, such as translation homeostasis and lipid synthesis. The BCR(KLHL25) ubiquitin ligase complex acts by mediating ubiquitination of hypophosphorylated EIF4EBP1 (4E-BP1): ubiquitination and subsequent degradation of hypophosphorylated EIF4EBP1 (4E-BP1) probably serves as a homeostatic mechanism to maintain translation and prevent eIF4E inhibition when eIF4E levels are low. The BCR(KLHL25) complex does not target EIF4EBP1 (4E-BP1) when it is hyperphosphorylated or associated with eIF4E. The BCR(KLHL25) complex also acts as a regulator of lipid synthesis by mediating ubiquitination and degradation of ACLY, thereby inhibiting lipid synthesis. BCR(KLHL25)-mediated degradation of ACLY promotes fatty acid oxidation and is required for differentiation of inducible regulatory T (iTreg) cells. The chain is Kelch-like protein 25 from Homo sapiens (Human).